The following is a 155-amino-acid chain: SsrA-binding protein (155 aa).

The protein belongs to the SmpB family.

The protein resides in the cytoplasm. Its function is as follows. Required for rescue of stalled ribosomes mediated by trans-translation. Binds to transfer-messenger RNA (tmRNA), required for stable association of tmRNA with ribosomes. tmRNA and SmpB together mimic tRNA shape, replacing the anticodon stem-loop with SmpB. tmRNA is encoded by the ssrA gene; the 2 termini fold to resemble tRNA(Ala) and it encodes a 'tag peptide', a short internal open reading frame. During trans-translation Ala-aminoacylated tmRNA acts like a tRNA, entering the A-site of stalled ribosomes, displacing the stalled mRNA. The ribosome then switches to translate the ORF on the tmRNA; the nascent peptide is terminated with the 'tag peptide' encoded by the tmRNA and targeted for degradation. The ribosome is freed to recommence translation, which seems to be the essential function of trans-translation. The sequence is that of SsrA-binding protein from Streptococcus pneumoniae serotype 4 (strain ATCC BAA-334 / TIGR4).